An 865-amino-acid polypeptide reads, in one-letter code: Alanine--tRNA ligase (865 aa).

H568, H572, C670, and H674 together coordinate Zn(2+).

This sequence belongs to the class-II aminoacyl-tRNA synthetase family. Zn(2+) is required as a cofactor.

Its subcellular location is the cytoplasm. The enzyme catalyses tRNA(Ala) + L-alanine + ATP = L-alanyl-tRNA(Ala) + AMP + diphosphate. In terms of biological role, catalyzes the attachment of alanine to tRNA(Ala) in a two-step reaction: alanine is first activated by ATP to form Ala-AMP and then transferred to the acceptor end of tRNA(Ala). Also edits incorrectly charged Ser-tRNA(Ala) and Gly-tRNA(Ala) via its editing domain. This Vibrio campbellii (strain ATCC BAA-1116) protein is Alanine--tRNA ligase.